The following is a 417-amino-acid chain: Gamma-glutamyl phosphate reductase (417 aa).

It belongs to the gamma-glutamyl phosphate reductase family.

The protein resides in the cytoplasm. It catalyses the reaction L-glutamate 5-semialdehyde + phosphate + NADP(+) = L-glutamyl 5-phosphate + NADPH + H(+). Its pathway is amino-acid biosynthesis; L-proline biosynthesis; L-glutamate 5-semialdehyde from L-glutamate: step 2/2. Catalyzes the NADPH-dependent reduction of L-glutamate 5-phosphate into L-glutamate 5-semialdehyde and phosphate. The product spontaneously undergoes cyclization to form 1-pyrroline-5-carboxylate. The polypeptide is Gamma-glutamyl phosphate reductase (Clostridium novyi (strain NT)).